We begin with the raw amino-acid sequence, 881 residues long: Ent-kaurene synthase CPS/KS, chloroplastic (881 aa).

The N-terminal 41 residues, 1-41, are a transit peptide targeting the chloroplast; sequence MASSTLIQNRSCGVTSSMSSFQIFRGQPLRFPGTRTPAAVQ. Residues aspartate 417, aspartate 419, aspartate 635, aspartate 639, asparagine 778, aspartate 779, and glutamate 786 each contribute to the Mg(2+) site. Positions 417 to 422 match the DXDDTA motif motif; sequence DVDDTA. Residues 635–639 carry the DDXXD motif motif; it reads DDYFD.

This sequence belongs to the terpene synthase family. The cofactor is Mg(2+).

The protein localises to the plastid. It localises to the chloroplast. The catalysed reaction is (2E,6E,10E)-geranylgeranyl diphosphate = ent-copalyl diphosphate. The enzyme catalyses ent-copalyl diphosphate = ent-kaur-16-ene + diphosphate. It catalyses the reaction ent-copalyl diphosphate = ent-beyerene + diphosphate. It carries out the reaction ent-copalyl diphosphate = ent-sandaracopimara-8(14),15-diene + diphosphate. The catalysed reaction is ent-copalyl diphosphate = ent-isokaurene + diphosphate. The enzyme catalyses ent-copalyl diphosphate + H2O = 16alpha-hydroxy-ent-kaurene + diphosphate. It functions in the pathway secondary metabolite biosynthesis; terpenoid biosynthesis. In terms of biological role, bifunctional copalyl diphosphate/kaurene synthase involved in the biosynthesis of labdane-related diterpenoids (LRDs) natural products such as ent-beyerene, an antimicrobial compound. Supports the conversion of geranylgeranyl diphosphate (GGPP) to ent-copalyl diphosphate (ent-CDP). Also catalyzes the subsequent cyclization of ent-CDP into many diterpenes, including ent-kaur-16-ene as the major product, and ent-beyerene, ent-sandaracopimaradiene, ent-kaur-15-ene (ent-isokaurene) and 16-hydroxy-ent-kaurene (ent-16-alpha-hydroxy-kaurene) as minor products. The sequence is that of Ent-kaurene synthase CPS/KS, chloroplastic from Physcomitrium patens (Spreading-leaved earth moss).